The sequence spans 156 residues: Ribosomal RNA large subunit methyltransferase H (156 aa).

Residues Gly-104 and 123-128 each bind S-adenosyl-L-methionine; that span reads LSAMTL.

It belongs to the RNA methyltransferase RlmH family. Homodimer.

The protein resides in the cytoplasm. It catalyses the reaction pseudouridine(1915) in 23S rRNA + S-adenosyl-L-methionine = N(3)-methylpseudouridine(1915) in 23S rRNA + S-adenosyl-L-homocysteine + H(+). Its function is as follows. Specifically methylates the pseudouridine at position 1915 (m3Psi1915) in 23S rRNA. The protein is Ribosomal RNA large subunit methyltransferase H of Chromobacterium violaceum (strain ATCC 12472 / DSM 30191 / JCM 1249 / CCUG 213 / NBRC 12614 / NCIMB 9131 / NCTC 9757 / MK).